The sequence spans 1985 residues: Treslin (1985 aa).

Disordered regions lie at residues 574 to 609 (AQKA…LKPT), 791 to 858 (EEKS…QPNK), 894 to 974 (IQET…SIVE), 999 to 1033 (RRNS…RPGS), 1072 to 1156 (VYKT…LWGR), 1184 to 1243 (VKTP…PSGY), 1849 to 1875 (HEDS…QSRS), and 1938 to 1966 (FSDG…SPFR). Over residues 823 to 837 (RSAKKRRSTALARHR) the composition is skewed to basic residues. The span at 964 to 974 (SESNSNISIVE) shows a compositional bias: low complexity. Composition is skewed to polar residues over residues 999 to 1026 (RRNS…QLQQ) and 1085 to 1097 (SKNI…QSGN). Residues 1105-1114 (TPYTPRTPSR) are compositionally biased toward low complexity. 2 stretches are compositionally biased toward basic and acidic residues: residues 1144 to 1156 (KPEE…LWGR) and 1191 to 1200 (QRLESKDFRT). Positions 1201–1224 (PSRTPTRSNNTTPAKQSMQISNTP) are enriched in polar residues. Over residues 1225 to 1238 (RKSDLKHPQEHESR) the composition is skewed to basic and acidic residues.

Belongs to the treslin family. In terms of assembly, interacts with topbp1 (via BRCT domains); interaction is cdk2-dependent. Component of the replisome complex. Phosphorylated during interphase. Cdk2 promotes both phosphorylation and formation of a ticrr-topbp1 complex.

It localises to the nucleus. Regulator of DNA replication and S/M and G2/M checkpoints. Regulates the triggering of DNA replication initiation via its interaction with topbp1 by participating in cdk2-mediated loading of cdc45l onto replication origins. Required for the transition from pre-replication complex (pre-RC) to pre-initiation complex (pre-IC). Required to prevent mitotic entry after treatment with ionizing radiation. This chain is Treslin (ticrr), found in Xenopus laevis (African clawed frog).